Consider the following 703-residue polypeptide: Polyribonucleotide nucleotidyltransferase (703 aa).

The Mg(2+) site is built by Asp485 and Asp491. The 60-residue stretch at 552-611 (PRAYTINIDTDKIRTLIGTGGKTINKIIEETGVKIDIREDGTVFVLSSDADSANRALKMI) folds into the KH domain. Positions 621–689 (GEVYLGKVTK…NQGRVNLSRK (69 aa)) constitute an S1 motif domain.

Belongs to the polyribonucleotide nucleotidyltransferase family. The cofactor is Mg(2+).

The protein localises to the cytoplasm. It catalyses the reaction RNA(n+1) + phosphate = RNA(n) + a ribonucleoside 5'-diphosphate. Involved in mRNA degradation. Catalyzes the phosphorolysis of single-stranded polyribonucleotides processively in the 3'- to 5'-direction. The chain is Polyribonucleotide nucleotidyltransferase from Clostridium acetobutylicum (strain ATCC 824 / DSM 792 / JCM 1419 / IAM 19013 / LMG 5710 / NBRC 13948 / NRRL B-527 / VKM B-1787 / 2291 / W).